Consider the following 544-residue polypeptide: CTP synthase (544 aa).

Positions 1–265 (MTKFIFVTGG…DDIICEHLDL (265 aa)) are amidoligase domain. A CTP-binding site is contributed by Ser-13. Residue Ser-13 coordinates UTP. ATP-binding positions include 14 to 19 (SLGKGI) and Asp-71. Asp-71 and Glu-139 together coordinate Mg(2+). Residues 146 to 148 (DIE), 186 to 191 (KTKPTQ), and Lys-222 each bind CTP. UTP is bound by residues 186–191 (KTKPTQ) and Lys-222. The Glutamine amidotransferase type-1 domain maps to 290–542 (NIAMVGKYVD…VEAALAYQAD (253 aa)). Gly-351 contributes to the L-glutamine binding site. Residue Cys-378 is the Nucleophile; for glutamine hydrolysis of the active site. L-glutamine is bound by residues 379 to 382 (LGMQ), Glu-402, and Arg-469. Residues His-515 and Glu-517 contribute to the active site.

It belongs to the CTP synthase family. In terms of assembly, homotetramer.

The enzyme catalyses UTP + L-glutamine + ATP + H2O = CTP + L-glutamate + ADP + phosphate + 2 H(+). The catalysed reaction is L-glutamine + H2O = L-glutamate + NH4(+). It carries out the reaction UTP + NH4(+) + ATP = CTP + ADP + phosphate + 2 H(+). Its pathway is pyrimidine metabolism; CTP biosynthesis via de novo pathway; CTP from UDP: step 2/2. Allosterically activated by GTP, when glutamine is the substrate; GTP has no effect on the reaction when ammonia is the substrate. The allosteric effector GTP functions by stabilizing the protein conformation that binds the tetrahedral intermediate(s) formed during glutamine hydrolysis. Inhibited by the product CTP, via allosteric rather than competitive inhibition. In terms of biological role, catalyzes the ATP-dependent amination of UTP to CTP with either L-glutamine or ammonia as the source of nitrogen. Regulates intracellular CTP levels through interactions with the four ribonucleotide triphosphates. The protein is CTP synthase of Laribacter hongkongensis (strain HLHK9).